A 225-amino-acid chain; its full sequence is uncharacterized protein (225 aa).

In terms of domain architecture, Fe2OG dioxygenase spans 114 to 219; that stretch reads DAEAIIMQVY…RLSVTMRRII (106 aa).

The protein belongs to the iron/ascorbate-dependent oxidoreductase family.

It localises to the cytoplasm. Its subcellular location is the nucleus. This is an uncharacterized protein from Schizosaccharomyces pombe (strain 972 / ATCC 24843) (Fission yeast).